Here is a 229-residue protein sequence, read N- to C-terminus: ATP-dependent Clp protease proteolytic subunit 1 (229 aa).

Serine 129 acts as the Nucleophile in catalysis. Histidine 154 is a catalytic residue.

The protein belongs to the peptidase S14 family. Fourteen ClpP subunits assemble into 2 heptameric rings which stack back to back to give a disk-like structure with a central cavity, resembling the structure of eukaryotic proteasomes.

The protein resides in the cytoplasm. The catalysed reaction is Hydrolysis of proteins to small peptides in the presence of ATP and magnesium. alpha-casein is the usual test substrate. In the absence of ATP, only oligopeptides shorter than five residues are hydrolyzed (such as succinyl-Leu-Tyr-|-NHMec, and Leu-Tyr-Leu-|-Tyr-Trp, in which cleavage of the -Tyr-|-Leu- and -Tyr-|-Trp bonds also occurs).. Cleaves peptides in various proteins in a process that requires ATP hydrolysis. Has a chymotrypsin-like activity. Plays a major role in the degradation of misfolded proteins. This Thermosynechococcus vestitus (strain NIES-2133 / IAM M-273 / BP-1) protein is ATP-dependent Clp protease proteolytic subunit 1.